A 145-amino-acid polypeptide reads, in one-letter code: 3-dehydroquinate dehydratase (145 aa).

Residue Y22 is the Proton acceptor of the active site. Substrate-binding residues include N71, H77, and D84. Catalysis depends on H97, which acts as the Proton donor. Substrate contacts are provided by residues 98 to 99 and R108; that span reads IS.

The protein belongs to the type-II 3-dehydroquinase family. As to quaternary structure, homododecamer.

It carries out the reaction 3-dehydroquinate = 3-dehydroshikimate + H2O. It functions in the pathway metabolic intermediate biosynthesis; chorismate biosynthesis; chorismate from D-erythrose 4-phosphate and phosphoenolpyruvate: step 3/7. Catalyzes a trans-dehydration via an enolate intermediate. The protein is 3-dehydroquinate dehydratase of Thermotoga neapolitana (strain ATCC 49049 / DSM 4359 / NBRC 107923 / NS-E).